An 816-amino-acid polypeptide reads, in one-letter code: H(+)/Cl(-) exchange transporter 5 (816 aa).

At 1-124 (MAMWQGAMDN…WALIHSVSDA (124 aa)) the chain is on the cytoplasmic side. Transmembrane regions (helical) follow at residues 125–162 (FSGW…ICTG) and 208–231 (VNYF…VKAF). The short motif at 237–241 (GSGIP) is the Selectivity filter part_1 element. Ser-238 is a chloride binding site. An intramembrane region (helical) is located at residues 240–247 (IPEIKTIL). 2 helical membrane passes run 256–275 (LGKW…VSSG) and 281–300 (EGPL…HCFN). The Selectivity filter part_2 motif lies at 279–283 (GKEGP). 2 consecutive intramembrane regions (helical) follow at residues 312–324 (VLSA…VSVA) and 328–336 (PIGGVLFSL). The next 5 helical transmembrane spans lie at 348–366 (LWRS…RSIN), 389–414 (LVPF…IAWC), 422–442 (LGKY…ILAF), 498–518 (MWQL…TFGM), and 523–542 (GLFI…LGVG). The Selectivity filter part_3 motif lies at 523-527 (GLFIP). Phe-525 contacts chloride. An intramembrane region (helical) is located at residues 570-584 (GLYAMVGAAACLGGV). An intramembrane region (note=Loop between two helices) is located at residues 585 to 587 (TRM). Positions 588 to 599 (TVSLVVIMFELT) form an intramembrane region, helical. Residues 600-604 (GGLEY) constitute an intramembrane region (note=Loop between two helices). Residues 605 to 622 (IVPLMAAAMTSKWVADAL) form a helical membrane-spanning segment. Over 623–816 (GREGIYDAHI…NQDPDSILFN (194 aa)) the chain is Cytoplasmic. Residue Tyr-628 participates in chloride binding. CBS domains follow at residues 656-720 (MKPR…ARKK) and 752-812 (ILDL…DPDS). ATP contacts are provided by residues Thr-666, 687–689 (YSG), and 794–797 (TKKD).

It belongs to the chloride channel (TC 2.A.49) family. ClC-5/CLCN5 subfamily. In terms of assembly, interacts with NEDD4 and NEDD4L. Ubiquitinated by NEDD4L in the presence of albumin; which promotes endocytosis and proteasomal degradation. As to expression, kidney specific.

It localises to the golgi apparatus membrane. The protein resides in the endosome membrane. The protein localises to the cell membrane. It carries out the reaction 2 chloride(in) + H(+)(out) = 2 chloride(out) + H(+)(in). Its function is as follows. Proton-coupled chloride transporter. Functions as antiport system and exchanges chloride ions against protons. Important for normal acidification of the endosome lumen. May play an important role in renal tubular function. The CLC channel family contains both chloride channels and proton-coupled anion transporters that exchange chloride or another anion for protons. The absence of conserved gating glutamate residues is typical for family members that function as channels. In Mus musculus (Mouse), this protein is H(+)/Cl(-) exchange transporter 5 (Clcn5).